The following is a 302-amino-acid chain: HTH-type transcriptional regulator AlsR (302 aa).

Positions 1–58 constitute an HTH lysR-type domain; it reads MELRHLQYFIAVAEELHFGKAARRLNMTQPPLSQQIKQLEEEVGVTLLKRTKRFVELT. The H-T-H motif DNA-binding region spans 18-37; sequence FGKAARRLNMTQPPLSQQIK.

Belongs to the LysR transcriptional regulatory family.

Regulates the expression of the alsSD operon for acetoin biosynthesis. The chain is HTH-type transcriptional regulator AlsR (alsR) from Bacillus subtilis (strain 168).